The primary structure comprises 41 residues: Large ribosomal subunit protein bL36 (41 aa).

The protein belongs to the bacterial ribosomal protein bL36 family.

In Bartonella tribocorum (strain CIP 105476 / IBS 506), this protein is Large ribosomal subunit protein bL36.